Consider the following 116-residue polypeptide: Fluoride-specific ion channel FluC 2 (116 aa).

A run of 2 helical transmembrane segments spans residues 3–23 (LLTA…RYAV) and 43–63 (LLFG…AVTV). The Na(+) site is built by Gly-67 and Thr-70. The helical transmembrane segment at 96–116 (VGTLAAALLAVFLGIALGAAL) threads the bilayer.

It belongs to the fluoride channel Fluc/FEX (TC 1.A.43) family.

It is found in the cell membrane. It carries out the reaction fluoride(in) = fluoride(out). Its activity is regulated as follows. Na(+) is not transported, but it plays an essential structural role and its presence is essential for fluoride channel function. Its function is as follows. Fluoride-specific ion channel. Important for reducing fluoride concentration in the cell, thus reducing its toxicity. The chain is Fluoride-specific ion channel FluC 2 from Natronomonas pharaonis (strain ATCC 35678 / DSM 2160 / CIP 103997 / JCM 8858 / NBRC 14720 / NCIMB 2260 / Gabara) (Halobacterium pharaonis).